The chain runs to 349 residues: Dehydrogenase FPY6 (349 aa).

It belongs to the Gfo/Idh/MocA family.

The protein operates within secondary metabolite biosynthesis. Its function is as follows. Dehydrogenase; part of the gene cluster that mediates the biosynthesis of the gamma-pyrones fusapyrone (FPY) and deoxyfusapyrone (dFPY). FPY is an undecaketide and thus likely synthesized by the polyketide synthase FPY1 from acetyl-CoA functioning as starter unit and the addition of 10 malonyl-CoA extender units by successive Claisen-condensations. Next to this, FPY shares some rare features: C-glycosylated 4-deoxyglucose at C-3, a gem-dimethyl group at C-13, and an alpha-beta to beta-gamma double bond shift at C-20. During FPY biosynthesis mono-C-methyl groups are transferred to the tetra-, penta-, hexa- and heptaketide, while two C-methyl groups are transferred to the nonaketide, suggesting that the CMet domain is programmed to selectively catalyze two successive C-alpha-methylation reactions of the nonaketide, while other alpha-carbons are non- or mono-methylated only. While the origin of the 4'-deoxyglucose moiety remains opaque, its transfer to C-3 is most likely mediated by the C-glycosyltransferase FPY2. Next to this, the hydroxyl group present at C-33 and discriminating between FPY and dFPY, is likely to be installed by the cytochrome P450 monooxygenase FPY7. No putative function can be predicted for the remaining genes FPY3-FPY6. The chain is Dehydrogenase FPY6 from Fusarium mangiferae (Mango malformation disease fungus).